Consider the following 714-residue polypeptide: MTEIIDLDLVDDFIKKPMVKQQKNQSSKPRVKRRGQLTFDDFRNIKIVEEPVVLSHNSSIDESLDAATQNTKKREKYEGTCDEEMKTKEMEANMASKYSNIKTHSNDTNKVESISEHTTSNNRPLNTLNWSPNIPLRYSDFAKFMSDETVTESNWAPPLCTPLPYAGDVMKILSFIVKFKWVFSDDLLNLSFQDVEIGLELKVAGHSAKNIRICQDKMNLLFCSLLRLLFCSEKRADNQTHRNFTLKRFLSLKNPYGKLVGKLRSLIQEWGLPKEWRGNSDILSTLNFNGGGLLTMEPLDRIILLRCMIDWNCSYSALFHNEIQRLTHLKGDTGFNHQTFHASRFAMCGANNILDSCEVLCSLMSQKLENRKKRKPSDKGKLSKINSQMKFLKGVRKSLSEKVTTDRLRAAVKINEEWGEYFANEFTHTPIDDPTVDEIYKLRTSEFMIARIPRVGDFYLPPFWIGNECSSVNTSYSFNDMSTYLNYFVKFKEEGTKILPAKTAQNENKCQLKLIYRNTPACIRNLQFNDVHFAEVPHWFEVAGDSNSLSNFIEYLESLSSLTENDTDDTKKGIDNLIEFLKIFSIFINETIQRITAAPTGSTEGRHLRTSSQRRTTVHYSSDVNGDVSEESENEVDIDVSDDYDSEYLSEENTLTRKGEDRTDKSFGKRELHNGAKDCDRNCDDIEIFSEPVRQLQDNSREKRSLRRNARKGL.

Disordered regions lie at residues 598–674 (APTG…ELHN) and 694–714 (RQLQDNSREKRSLRRNARKGL). The segment covering 610 to 624 (TSSQRRTTVHYSSDV) has biased composition (polar residues). The span at 628 to 650 (VSEESENEVDIDVSDDYDSEYLS) shows a compositional bias: acidic residues. Residues 654-674 (TLTRKGEDRTDKSFGKRELHN) are compositionally biased toward basic and acidic residues. The span at 704 to 714 (RSLRRNARKGL) shows a compositional bias: basic residues.

Interacts with GAL11 and SIR2.

It localises to the cytoplasm. The protein resides in the nucleus. Involved in HMR and telomere silencing via the recruitment or stabilizing of the SIR (silent information regulators) complex. The polypeptide is Protein ESC8 (ESC8) (Saccharomyces cerevisiae (strain ATCC 204508 / S288c) (Baker's yeast)).